We begin with the raw amino-acid sequence, 200 residues long: NADH-quinone oxidoreductase subunit B (200 aa).

C79, C80, C144, and C174 together coordinate [4Fe-4S] cluster.

It belongs to the complex I 20 kDa subunit family. NDH-1 is composed of 14 different subunits. Subunits NuoB, C, D, E, F, and G constitute the peripheral sector of the complex. It depends on [4Fe-4S] cluster as a cofactor.

It is found in the cell inner membrane. It carries out the reaction a quinone + NADH + 5 H(+)(in) = a quinol + NAD(+) + 4 H(+)(out). Its function is as follows. NDH-1 shuttles electrons from NADH, via FMN and iron-sulfur (Fe-S) centers, to quinones in the respiratory chain. The immediate electron acceptor for the enzyme in this species is believed to be ubiquinone. Couples the redox reaction to proton translocation (for every two electrons transferred, four hydrogen ions are translocated across the cytoplasmic membrane), and thus conserves the redox energy in a proton gradient. The polypeptide is NADH-quinone oxidoreductase subunit B (Caulobacter vibrioides (strain NA1000 / CB15N) (Caulobacter crescentus)).